Consider the following 483-residue polypeptide: ATP-dependent RNA helicase DDX25 (483 aa).

A Nuclear export signal motif is present at residues 61 to 74 (LAANSLLNKLIRQS). The short motif at 97 to 125 (KTFEELRLKEELLKGIYAMGFNRPSKIQE) is the Q motif element. The Nuclear localization signal signature appears at 100 to 114 (EELRLKEELLKGIYA). The Helicase ATP-binding domain occupies 130 to 300 (MMLAHPPQNL…ERIIPDPNVI (171 aa)). 143 to 150 (SQSGTGKT) provides a ligand contact to ATP. Residues 247-250 (DEAD) carry the DEAD box motif. Residues 311-478 (NIRQYYVLCG…QLDPEDMDEI (168 aa)) form the Helicase C-terminal domain.

This sequence belongs to the DEAD box helicase family. Post-translationally, phosphorylated on threonine residues. The phosphorylated form is found in the cytoplasm but not in the nucleus.

It localises to the cytoplasm. It is found in the nucleus. It catalyses the reaction ATP + H2O = ADP + phosphate + H(+). Functionally, ATP-dependent RNA helicase. Required for mRNA export and translation regulation during spermatid development. This chain is ATP-dependent RNA helicase DDX25 (DDX25), found in Bos taurus (Bovine).